Consider the following 545-residue polypeptide: Chaperonin GroEL (545 aa).

ATP-binding positions include 30–33, Lys51, 87–91, Gly415, and Asp495; these read TLGP and DGTTT.

It belongs to the chaperonin (HSP60) family. In terms of assembly, forms a cylinder of 14 subunits composed of two heptameric rings stacked back-to-back. Interacts with the co-chaperonin GroES.

It is found in the cytoplasm. The enzyme catalyses ATP + H2O + a folded polypeptide = ADP + phosphate + an unfolded polypeptide.. In terms of biological role, together with its co-chaperonin GroES, plays an essential role in assisting protein folding. The GroEL-GroES system forms a nano-cage that allows encapsulation of the non-native substrate proteins and provides a physical environment optimized to promote and accelerate protein folding. This Shewanella amazonensis (strain ATCC BAA-1098 / SB2B) protein is Chaperonin GroEL.